Consider the following 462-residue polypeptide: Fumarate hydratase class II (462 aa).

Residues 97 to 99 (SGT), 127 to 130 (HPND), 137 to 139 (SSN), and T185 each bind substrate. H186 functions as the Proton donor/acceptor in the catalytic mechanism. S316 is a catalytic residue. Substrate-binding positions include S317 and 322–324 (KVN).

This sequence belongs to the class-II fumarase/aspartase family. Fumarase subfamily. As to quaternary structure, homotetramer.

It localises to the cytoplasm. It catalyses the reaction (S)-malate = fumarate + H2O. It functions in the pathway carbohydrate metabolism; tricarboxylic acid cycle; (S)-malate from fumarate: step 1/1. Functionally, involved in the TCA cycle. Catalyzes the stereospecific interconversion of fumarate to L-malate. The sequence is that of Fumarate hydratase class II from Bacillus anthracis.